Reading from the N-terminus, the 1648-residue chain is Homeostatic regulator of DAG (1648 aa).

The DMAP1-binding domain maps to 5-101 (IPPTLPLDLQ…YRVTTINSTS (97 aa)). N-linked (GlcNAc...) asparagine glycans are attached at residues Asn-28, Asn-71, and Asn-98. 2 disordered regions span residues 52 to 73 (PYTPLRSPNSRKSKHLHRRNTS) and 96 to 130 (TINSTSANNTPRRRSKRYTASLQSSLPGSSDENGS). The segment covering 60 to 71 (NSRKSKHLHRRN) has biased composition (basic residues). Polar residues-rich tracts occupy residues 96-105 (TINSTSANNT) and 113-128 (YTASLQSSLPGSSDEN). Phosphoserine is present on Ser-99. N-linked (GlcNAc...) asparagine glycans are attached at residues Asn-128, Asn-151, and Asn-209. Residues 158 to 893 (AMTDSLPLIL…VEKKFLNNDL (736 aa)) are fatty acyl-AMP ligase-like domain 1. Residues 228–248 (VIEFTIALLGCFISGMAAVPV) traverse the membrane as a helical segment. N-linked (GlcNAc...) asparagine glycans are attached at residues Asn-288, Asn-328, Asn-575, Asn-644, and Asn-730. At Ser-751 the chain carries Phosphoserine. N-linked (GlcNAc...) asparagine glycosylation is found at Asn-881, Asn-917, Asn-995, and Asn-1009. Residues 950–1648 (VKPKLALQCS…LLSDYEKDNI (699 aa)) form a fatty acyl-AMP ligase-like domain 2 region. The chain crosses the membrane as a helical span at residues 1061–1081 (YVAMIMACLYCNLLVIPLPSV). Asn-1198 is a glycosylation site (N-linked (GlcNAc...) asparagine). Residues 1224–1244 (GLGFMFSCLLGIYTGASTCLF) form a helical membrane-spanning segment. N-linked (GlcNAc...) asparagine glycosylation is found at Asn-1301, Asn-1302, Asn-1447, Asn-1472, Asn-1488, Asn-1565, Asn-1597, and Asn-1634.

It is found in the vacuole membrane. The protein resides in the mitochondrion membrane. Its function is as follows. Homeostatic regulator of a chemically distinct subset of diacylglycerols (DAGs) with C36 chain length that prevents the toxic accumulation of these specific DAGs in the logarithmic growth phase, which otherwise leads to endoplasmic reticulum stress. Maintains the basal level of DAG subspecies by directly facilitating DAG to triacylglycerol (TAG) conversion process, possibly via adenylation activity of its FLD domains. Does not affect the abundant DAG species (representing over 90% of total DAG pool), comprised of C32 and C34 chain lengths. Required for vacuole fusion-mediated osmoadaptation. In Saccharomyces cerevisiae (strain ATCC 204508 / S288c) (Baker's yeast), this protein is Homeostatic regulator of DAG.